Here is a 988-residue protein sequence, read N- to C-terminus: Mediator of RNA polymerase II transcription subunit 24 (988 aa).

6 short sequence motifs (LXXLL motif) span residues 128-132, 341-345, 445-449, 555-559, 786-790, and 856-860; these read LNWLL, LTPLL, LDLLL, LVALL, LPSLL, and LMRLL.

This sequence belongs to the Mediator complex subunit 24 family. In terms of assembly, component of the Mediator complex.

It is found in the nucleus. Functionally, component of the Mediator complex, a coactivator involved in the regulated transcription of nearly all RNA polymerase II-dependent genes. Mediator functions as a bridge to convey information from gene-specific regulatory proteins to the basal RNA polymerase II transcription machinery. Mediator is recruited to promoters by direct interactions with regulatory proteins and serves as a scaffold for the assembly of a functional preinitiation complex with RNA polymerase II and the general transcription factors. The protein is Mediator of RNA polymerase II transcription subunit 24 (med24) of Xenopus laevis (African clawed frog).